Consider the following 195-residue polypeptide: MTIGVLGLQGDFREHLWALQKLQVETIVVKTVEDLRKTKGLIIPGGESTTIGKLARLTGIADELEKLVDQDFPIYGTCAGMILLAKQIVNYPYQYSFGFMDIVVERNAYGRQVESFEVNLDIPSTGGLFKAIFIRAPKIVEWGEGVEVLARYGDSPVLVRQGNLLASSFHPELGQDLRIHKYFLEMAGVKHAGIC.

46 to 48 (GES) contributes to the L-glutamine binding site. The Nucleophile role is filled by Cys-78. Residues Arg-106 and 134–135 (IR) contribute to the L-glutamine site. Catalysis depends on charge relay system residues His-170 and Glu-172.

This sequence belongs to the glutaminase PdxT/SNO family. In terms of assembly, in the presence of PdxS, forms a dodecamer of heterodimers. Only shows activity in the heterodimer.

It carries out the reaction aldehydo-D-ribose 5-phosphate + D-glyceraldehyde 3-phosphate + L-glutamine = pyridoxal 5'-phosphate + L-glutamate + phosphate + 3 H2O + H(+). The catalysed reaction is L-glutamine + H2O = L-glutamate + NH4(+). It functions in the pathway cofactor biosynthesis; pyridoxal 5'-phosphate biosynthesis. Catalyzes the hydrolysis of glutamine to glutamate and ammonia as part of the biosynthesis of pyridoxal 5'-phosphate. The resulting ammonia molecule is channeled to the active site of PdxS. The polypeptide is Pyridoxal 5'-phosphate synthase subunit PdxT (Pseudothermotoga lettingae (strain ATCC BAA-301 / DSM 14385 / NBRC 107922 / TMO) (Thermotoga lettingae)).